A 208-amino-acid polypeptide reads, in one-letter code: Protein-L-isoaspartate O-methyltransferase (208 aa).

S59 is a catalytic residue.

It belongs to the methyltransferase superfamily. L-isoaspartyl/D-aspartyl protein methyltransferase family.

It is found in the cytoplasm. The catalysed reaction is [protein]-L-isoaspartate + S-adenosyl-L-methionine = [protein]-L-isoaspartate alpha-methyl ester + S-adenosyl-L-homocysteine. Catalyzes the methyl esterification of L-isoaspartyl residues in peptides and proteins that result from spontaneous decomposition of normal L-aspartyl and L-asparaginyl residues. It plays a role in the repair and/or degradation of damaged proteins. This Pectobacterium carotovorum subsp. carotovorum (strain PC1) protein is Protein-L-isoaspartate O-methyltransferase.